Consider the following 483-residue polypeptide: Zinc metalloproteinase/disintegrin (483 aa).

An N-terminal signal peptide occupies residues 1–20; the sequence is MIQVLLVTLCLAAFPYQGNS. Residues 21-191 constitute a propeptide that is removed on maturation; it reads IILESGNVND…KASQLNLTPE (171 aa). One can recognise a Peptidase M12B domain in the interval 198-394; that stretch reads RYIELVVVAD…HNPQCMLNEP (197 aa). Glu-201 and Asp-285 together coordinate Ca(2+). 3 cysteine pairs are disulfide-bonded: Cys-309–Cys-389, Cys-349–Cys-373, and Cys-351–Cys-356. His-334 contacts Zn(2+). The active site involves Glu-335. Positions 338 and 344 each coordinate Zn(2+). Residues Cys-389 and Asn-392 each contribute to the Ca(2+) site. A propeptide spanning residues 395-414 is cleaved from the precursor; the sequence is LRTDIVSTPVSGNELWETGE. A Disintegrin domain is found at 402-483; sequence TPVSGNELWE…AGCPRNPFHA (82 aa). 4 disulfides stabilise this stretch: Cys-425–Cys-448, Cys-439–Cys-445, Cys-444–Cys-469, and Cys-457–Cys-476. Residues 461–463 carry the Cell attachment site; atypical (KGD) motif; that stretch reads KGD.

The protein belongs to the venom metalloproteinase (M12B) family. P-II subfamily. P-IIe sub-subfamily. In terms of assembly, heterodimer with piscivostatin-alpha; disulfide-linked (disintegrin). Zn(2+) serves as cofactor. In terms of tissue distribution, expressed by the venom gland.

The protein resides in the secreted. In terms of biological role, impairs hemostasis in the envenomed animal. Its function is as follows. Inhibits platelet aggregation induced by ADP. Acts by inhibiting fibrinogen interaction with platelet receptors GPIIb/GPIIIa (ITGA2B/ITGB3). Also inhibits platelet aggregate dissociation in human platelet-rich plasma. The sequence is that of Zinc metalloproteinase/disintegrin from Agkistrodon piscivorus piscivorus (Eastern cottonmouth).